The following is a 431-amino-acid chain: Adenylosuccinate synthetase (431 aa).

GTP-binding positions include 13–19 (GDEGKGK) and 41–43 (GHT). D14 (proton acceptor) is an active-site residue. Mg(2+) contacts are provided by D14 and G41. Residues 14–17 (DEGK), 39–42 (NAGH), T130, R144, Q225, T240, and R304 contribute to the IMP site. H42 serves as the catalytic Proton donor. Residue 300–306 (TTTGRSR) coordinates substrate. Residues R306, 332–334 (KLD), and 414–416 (STG) contribute to the GTP site.

Belongs to the adenylosuccinate synthetase family. As to quaternary structure, homodimer. It depends on Mg(2+) as a cofactor.

The protein resides in the cytoplasm. It carries out the reaction IMP + L-aspartate + GTP = N(6)-(1,2-dicarboxyethyl)-AMP + GDP + phosphate + 2 H(+). Its pathway is purine metabolism; AMP biosynthesis via de novo pathway; AMP from IMP: step 1/2. In terms of biological role, plays an important role in the de novo pathway of purine nucleotide biosynthesis. Catalyzes the first committed step in the biosynthesis of AMP from IMP. This chain is Adenylosuccinate synthetase, found in Marinobacter nauticus (strain ATCC 700491 / DSM 11845 / VT8) (Marinobacter aquaeolei).